The primary structure comprises 159 residues: 18.0 kDa class I heat shock protein (159 aa).

One can recognise a sHSP domain in the interval 45 to 159 (ETAAFANTHI…PEVKSIHISG (115 aa)).

This sequence belongs to the small heat shock protein (HSP20) family. As to quaternary structure, forms oligomeric structures.

The protein localises to the cytoplasm. This is 18.0 kDa class I heat shock protein from Daucus carota (Wild carrot).